A 638-amino-acid chain; its full sequence is Chaperone protein DnaK (638 aa).

Position 198 is a phosphothreonine; by autocatalysis (Thr-198). Disordered stretches follow at residues 539-559 (DGLA…LASD) and 602-638 (QAKA…DDKK). Residues 611–623 (GQAHDAGQEKPAD) are compositionally biased toward basic and acidic residues. Over residues 624-638 (DVVDAEFEEVKDDKK) the composition is skewed to acidic residues.

This sequence belongs to the heat shock protein 70 family.

Functionally, acts as a chaperone. This Shewanella frigidimarina (strain NCIMB 400) protein is Chaperone protein DnaK.